A 377-amino-acid polypeptide reads, in one-letter code: MKFERARPFIAIVFIQCLYALMSIVAKLALNKGMSPHVLVAYRMAVASALITPFALILERNTRPKLTFKILLQIAILSLFEPVVEQNLYYSGMKLTTATFTSALCNALPAMTFIMACVFKLEKVTIERRHSQAKLVGTMVAIGGAMLMTFVKGNVIELPWTSNSRGLNGHTHAMRIPKQADIARGSIMLVASCFSWSCYIILQAKILAQYKAELSLTALMCIMGMLEATVMGLIWERKNMSVWKINPDVTLLASIYGGLVSGLAYYVIGWASKERGPVFVSAFNPLSMVLVAILSTFVFLEKVYVGRVIGSVVIVIGIYLVLWGKSKDKGGMLQPNAGCAETVVKIDQQKVPTPDNNQVVSISYHLMIPKAAARSQE.

10 helical membrane passes run Phe-9–Ala-29, Val-38–Leu-58, Pro-64–Val-84, Thr-99–Phe-119, Val-136–Ile-156, Ile-187–Leu-207, Leu-214–Ile-234, Leu-251–Ala-271, Phe-279–Phe-299, and Val-303–Trp-323. 2 consecutive EamA domains span residues Leu-18–Thr-149 and Phe-194–Leu-322.

Belongs to the drug/metabolite transporter (DMT) superfamily. Plant drug/metabolite exporter (P-DME) (TC 2.A.7.4) family.

It localises to the membrane. This chain is WAT1-related protein At5g13670, found in Arabidopsis thaliana (Mouse-ear cress).